The primary structure comprises 193 residues: Thymidine kinase (193 aa).

ATP-binding positions include 9 to 16 (ASMNAGKS) and 87 to 90 (DEAQ). Glu-88 functions as the Proton acceptor in the catalytic mechanism. 4 residues coordinate Zn(2+): Cys-145, Cys-147, Cys-182, and His-185.

Belongs to the thymidine kinase family. As to quaternary structure, homotetramer.

The protein resides in the cytoplasm. It catalyses the reaction thymidine + ATP = dTMP + ADP + H(+). The chain is Thymidine kinase from Zymomonas mobilis subsp. mobilis (strain ATCC 31821 / ZM4 / CP4).